The chain runs to 465 residues: Sperm microtubule associated protein 2-like (465 aa).

Polar residues predominate over residues 1-29 (MENQEFLSSSAPSEVTDGQVSTEISTCSE). Residues 1 to 140 (MENQEFLSSS…REAKETELLP (140 aa)) are disordered. Composition is skewed to basic and acidic residues over residues 40–70 (LDTH…QDQR) and 114–137 (KARE…KETE). 8 THEG repeats span residues 174 to 192 (RKCF…PKKQ), 214 to 233 (GALK…PKEV), 260 to 279 (PALF…PNGF), 297 to 316 (SLRI…AKGT), 333 to 352 (STLS…PRIK), 373 to 392 (AAMI…SKSV), 409 to 428 (ATTH…PNKR), and 446 to 465 (AALK…PLTR).

In Homo sapiens (Human), this protein is Sperm microtubule associated protein 2-like.